We begin with the raw amino-acid sequence, 130 residues long: Small ribosomal subunit protein uS9 (130 aa).

The protein belongs to the universal ribosomal protein uS9 family.

The polypeptide is Small ribosomal subunit protein uS9 (Shewanella pealeana (strain ATCC 700345 / ANG-SQ1)).